The primary structure comprises 292 residues: Histamine N-methyltransferase (292 aa).

Residue E28 participates in substrate binding. S-adenosyl-L-methionine-binding residues include G60, E89, and I142. N283 provides a ligand contact to substrate.

The protein belongs to the class I-like SAM-binding methyltransferase superfamily. HNMT family. In terms of assembly, monomer.

It is found in the cytoplasm. It catalyses the reaction histamine + S-adenosyl-L-methionine = N(tau)-methylhistamine + S-adenosyl-L-homocysteine + H(+). Inactivates histamine by N-methylation. Plays an important role in degrading histamine and in regulating the airway response to histamine. This is Histamine N-methyltransferase (hnmt) from Danio rerio (Zebrafish).